Here is a 250-residue protein sequence, read N- to C-terminus: 26S proteasome non-ATPase regulatory subunit 8 (250 aa).

The PCI domain maps to 63–233 (HDFETFDDYI…QEKPVNLDTV (171 aa)).

The protein belongs to the proteasome subunit S14 family.

Its function is as follows. Acts as a regulatory subunit of the 26S proteasome which is involved in the ATP-dependent degradation of ubiquitinated proteins. This is 26S proteasome non-ATPase regulatory subunit 8 from Caenorhabditis elegans.